Here is a 292-residue protein sequence, read N- to C-terminus: ATP synthase gamma chain (292 aa).

Belongs to the ATPase gamma chain family. F-type ATPases have 2 components, CF(1) - the catalytic core - and CF(0) - the membrane proton channel. CF(1) has five subunits: alpha(3), beta(3), gamma(1), delta(1), epsilon(1). CF(0) has three main subunits: a, b and c.

It is found in the cell membrane. Its function is as follows. Produces ATP from ADP in the presence of a proton gradient across the membrane. The gamma chain is believed to be important in regulating ATPase activity and the flow of protons through the CF(0) complex. The protein is ATP synthase gamma chain of Streptococcus pneumoniae serotype 2 (strain D39 / NCTC 7466).